A 925-amino-acid polypeptide reads, in one-letter code: Collagen alpha-2(I) chain (925 aa).

The interval 1 to 925 is disordered; sequence SGGFDFSFLP…FGYEGDFYRA (925 aa). 2 positions are modified to 4-hydroxyproline: proline 10 and proline 13. The span at 22-34 shows a compositional bias: gly residues; the sequence is RYYGVGLGPGPMG. Over residues 35–74 the composition is skewed to low complexity; sequence LMGPRGPPGASGAPGPQGFQGPAGEPGEPGQTGPAGARGP. 4-hydroxyproline is present on residues proline 42 and proline 48. A 5-hydroxylysine; alternate modification is found at lysine 103. The O-linked (Gal...) hydroxylysine; alternate glycan is linked to lysine 103. Residues 154 to 171 are compositionally biased toward low complexity; sequence DGSVGPVGPAGPIGSAGP. The segment covering 271 to 280 has biased composition (gly residues); that stretch reads GESGGKGEPG. Residues 281-291 are compositionally biased toward low complexity; that stretch reads SAGPQGPPGSS. Residues 306 to 315 are compositionally biased toward gly residues; the sequence is GLRGGPGSRG. 3 positions are modified to 4-hydroxyproline: proline 317, proline 332, and proline 335. Positions 363–379 are enriched in low complexity; it reads IDGRPGPIGPAGARGEA. Gly residues predominate over residues 423-432; that stretch reads GVQGGKGEQG. 2 stretches are compositionally biased toward low complexity: residues 479–496 and 508–518; these read PGESGAVGPSGAIGSRGP and EPGVVGAPGTA. The span at 519-528 shows a compositional bias: gly residues; the sequence is GPAGSGGLPG. Low complexity-rich tracts occupy residues 551-595 and 602-622; these read VGTT…PRGS and VGPAGPNGFAGPAGAAGQPGA. Positions 623–632 are enriched in basic and acidic residues; sequence KGERGTKGPK. The segment covering 640-650 has biased composition (low complexity); the sequence is PTGPVGSAGPA. Positions 660-669 are enriched in gly residues; sequence GSRGDGGPPG. The span at 671 to 680 shows a compositional bias: low complexity; that stretch reads TGFPGAAGRT. The span at 696–718 shows a compositional bias: gly residues; that stretch reads GAAGKGDQGPVGRGETGAGGPPG. Low complexity-rich tracts occupy residues 719-753 and 761-771; these read FTGEKGPSGEPGTAGPPGTAGPQGLLGAPGILGLP and LPGVAGAVGEP. Positions 772–782 are enriched in gly residues; it reads GPLGIGPPGAR. A compositionally biased stretch (low complexity) spans 791 to 806; it reads EPGPVGSVGPVGALGP. A compositionally biased stretch (basic and acidic residues) spans 816–827; it reads RGDKGEPGEKGP. Positions 897–907 are enriched in pro residues; that stretch reads PAGPPGPPGPP.

This sequence belongs to the fibrillar collagen family. As to quaternary structure, trimers of one alpha 2(I) and two alpha 1(I) chains. Interacts (via C-terminus) with TMEM131 (via PapD-L domain); the interaction is direct and is involved in assembly and TRAPPIII ER-to-Golgi transport complex-dependent secretion of collagen. Prolines at the third position of the tripeptide repeating unit (G-X-Y) are hydroxylated in some or all of the chains. As to expression, expressed in bones.

The protein localises to the secreted. It localises to the extracellular space. Its subcellular location is the extracellular matrix. Its function is as follows. Type I collagen is a member of group I collagen (fibrillar forming collagen). The protein is Collagen alpha-2(I) chain of Acratocnus sp. (strain SLP-2019) (Ground sloth).